Reading from the N-terminus, the 113-residue chain is Small ribosomal subunit protein bS6 (113 aa).

The protein belongs to the bacterial ribosomal protein bS6 family.

Functionally, binds together with bS18 to 16S ribosomal RNA. This Ruthia magnifica subsp. Calyptogena magnifica protein is Small ribosomal subunit protein bS6.